A 94-amino-acid polypeptide reads, in one-letter code: Translation initiation factor IF-1 (94 aa).

One can recognise an S1-like domain in the interval 1-72; the sequence is MAKEELIQFE…EKGRLIFRHK (72 aa). The segment at 71 to 94 is disordered; it reads HKDERPGGTGAPRSGPPRGQFRRR.

It belongs to the IF-1 family. As to quaternary structure, component of the 30S ribosomal translation pre-initiation complex which assembles on the 30S ribosome in the order IF-2 and IF-3, IF-1 and N-formylmethionyl-tRNA(fMet); mRNA recruitment can occur at any time during PIC assembly.

Its subcellular location is the cytoplasm. Functionally, one of the essential components for the initiation of protein synthesis. Stabilizes the binding of IF-2 and IF-3 on the 30S subunit to which N-formylmethionyl-tRNA(fMet) subsequently binds. Helps modulate mRNA selection, yielding the 30S pre-initiation complex (PIC). Upon addition of the 50S ribosomal subunit IF-1, IF-2 and IF-3 are released leaving the mature 70S translation initiation complex. The sequence is that of Translation initiation factor IF-1 from Rhodopseudomonas palustris (strain HaA2).